We begin with the raw amino-acid sequence, 208 residues long: FMN-dependent NADH:quinone oxidoreductase (208 aa).

FMN is bound by residues 17–19 (SNS), 99–102 (MWNL), and 143–146 (SRGG).

Belongs to the azoreductase type 1 family. As to quaternary structure, homodimer. The cofactor is FMN.

It carries out the reaction 2 a quinone + NADH + H(+) = 2 a 1,4-benzosemiquinone + NAD(+). It catalyses the reaction N,N-dimethyl-1,4-phenylenediamine + anthranilate + 2 NAD(+) = 2-(4-dimethylaminophenyl)diazenylbenzoate + 2 NADH + 2 H(+). Its function is as follows. Quinone reductase that provides resistance to thiol-specific stress caused by electrophilic quinones. Functionally, also exhibits azoreductase activity. Catalyzes the reductive cleavage of the azo bond in aromatic azo compounds to the corresponding amines. The chain is FMN-dependent NADH:quinone oxidoreductase from Staphylococcus aureus (strain Mu50 / ATCC 700699).